Consider the following 364-residue polypeptide: D-alanine--D-alanine ligase (364 aa).

One can recognise an ATP-grasp domain in the interval 146-352 (KLCAADAGVE…FDELISRLLL (207 aa)). 179–234 (TERFAFPVFVKPANLGSSVGISKVHNAAELRPALDKACALDAKVLVEETITGREVE) serves as a coordination point for ATP. Residues aspartate 305, glutamate 319, and asparagine 321 each coordinate Mg(2+).

The protein belongs to the D-alanine--D-alanine ligase family. Requires Mg(2+) as cofactor. Mn(2+) serves as cofactor.

The protein localises to the cytoplasm. The catalysed reaction is 2 D-alanine + ATP = D-alanyl-D-alanine + ADP + phosphate + H(+). The protein operates within cell wall biogenesis; peptidoglycan biosynthesis. In terms of biological role, cell wall formation. The chain is D-alanine--D-alanine ligase from Chlorobaculum parvum (strain DSM 263 / NCIMB 8327) (Chlorobium vibrioforme subsp. thiosulfatophilum).